We begin with the raw amino-acid sequence, 425 residues long: CinA-like protein (425 aa).

The protein belongs to the CinA family.

This Desulfovibrio desulfuricans (strain ATCC 27774 / DSM 6949 / MB) protein is CinA-like protein.